The chain runs to 251 residues: Hydroxyacylglutathione hydrolase (251 aa).

Histidine 53, histidine 55, aspartate 57, histidine 58, histidine 110, aspartate 127, and histidine 165 together coordinate Zn(2+).

It belongs to the metallo-beta-lactamase superfamily. Glyoxalase II family. As to quaternary structure, monomer. Zn(2+) serves as cofactor.

The enzyme catalyses an S-(2-hydroxyacyl)glutathione + H2O = a 2-hydroxy carboxylate + glutathione + H(+). Its pathway is secondary metabolite metabolism; methylglyoxal degradation; (R)-lactate from methylglyoxal: step 2/2. Thiolesterase that catalyzes the hydrolysis of S-D-lactoyl-glutathione to form glutathione and D-lactic acid. In Pectobacterium atrosepticum (strain SCRI 1043 / ATCC BAA-672) (Erwinia carotovora subsp. atroseptica), this protein is Hydroxyacylglutathione hydrolase.